The following is a 763-amino-acid chain: C6 finger domain transcription factor hasF (763 aa).

The segment covering 1–20 has biased composition (low complexity); it reads MDSTTSSSRFSVSSPQSGPS. Positions 1-25 are disordered; the sequence is MDSTTSSSRFSVSSPQSGPSAGIQK. The zn(2)-C6 fungal-type DNA-binding region spans 34-61; it reads CLTCRRRKVKCDHAQPVCTPCQRGGRVC. 3 disordered regions span residues 68–91, 112–145, and 189–219; these read PVSQAPSRVGTGSRVSRTNLRSGQ, GGNMSILPDAKGTSTGSPSDVDQGGNALPNPKCE, and DQSSGAPADSPPSDQPTPPFPFSGSTVESLT. Residues 80–89 show a composition bias toward polar residues; it reads SRVSRTNLRS. Pro residues predominate over residues 197–209; that stretch reads DSPPSDQPTPPFP.

The protein resides in the nucleus. Its function is as follows. Transcription factor; part of the gene cluster that mediates the biosynthesis of hexadehydro-astechrome (HAS), a tryptophan-derived iron(III)-complex that acts as a virulence factor in infected mice. Does not regulate the expression of the HAS biosynthetic genes (at least under the growth conditions tested). The sequence is that of C6 finger domain transcription factor hasF from Aspergillus fumigatus (strain CBS 144.89 / FGSC A1163 / CEA10) (Neosartorya fumigata).